The primary structure comprises 542 residues: Protein DETOXIFICATION 34 (542 aa).

The next 12 membrane-spanning stretches (helical) occupy residues 97–117 (APIAFNILCNYGVNSFTSIFV), 127–147 (AVAIALSVVSNFSFGFLLGMA), 176–196 (ILLGTSVCLLPLYIYATPLLI), 204–224 (IAEISGKFTTQIIPQMFALAI), 240–260 (IMAWIGFFALTLHIFILYLFI), 272–292 (AAFDVSAWGIAIAQVVYVVGW), 316–336 (FASAVMLCLEIWYFMTIIVLT), 344–364 (IAVGSLSICMNINGWEGMLFI), 390–410 (VIVTVIESLVIGVVCAIVILI), 435–455 (LLGITMILNSLQPVISGVAVG), 462–482 (VAYINLFCYYAFGLPLGFLLG), and 491–511 (GIWIGMICGTSLQTLILLYMI).

This sequence belongs to the multi antimicrobial extrusion (MATE) (TC 2.A.66.1) family.

The protein localises to the membrane. The protein is Protein DETOXIFICATION 34 of Arabidopsis thaliana (Mouse-ear cress).